The sequence spans 418 residues: Endoglucanase EG-II (418 aa).

An N-terminal signal peptide occupies residues 1 to 21; it reads MNKSVAPLLLAASILYGGAAA. The residue at position 22 (glutamine 22) is a Pyrrolidone carboxylic acid. The CBM1 domain maps to 22–57; that stretch reads QQTVWGQCGGIGWSGPTNCAPGSACSTLNPYYAQCI. The linker stretch occupies residues 58 to 91; the sequence is PGATTITTSTRPPSGPTTTTRATSTSSSTPPTSS. The segment at 63-91 is disordered; that stretch reads ITTSTRPPSGPTTTTRATSTSSSTPPTSS. The tract at residues 92–418 is catalytic; that stretch reads GVRFAGVNIA…SLVSSCLARK (327 aa). Cysteines 107 and 113 form a disulfide. The N-linked (GlcNAc) asparagine glycan is linked to asparagine 124. Cysteine 183 and cysteine 190 form a disulfide bridge. Glutamate 239 functions as the Proton donor/acceptor in the catalytic mechanism. Cystine bridges form between cysteine 323/cysteine 359 and cysteine 364/cysteine 414. Glutamate 350 functions as the Nucleophile in the catalytic mechanism.

Belongs to the glycosyl hydrolase 5 (cellulase A) family.

The protein localises to the secreted. The enzyme catalyses Endohydrolysis of (1-&gt;4)-beta-D-glucosidic linkages in cellulose, lichenin and cereal beta-D-glucans.. Endoglucanase (EG) that cleaves the internal beta-1,4-glucosidic bonds in cellulose. The degradation of cellulose involves an interplay between different cellulolytic enzymes. Hydrolysis starts with EGs, which cut internal glycosidic linkages to reduce the polymerization degree of the substrate and creates new chain ends for exocellobiohydrolases (CBHs). The CBH release the disaccharide cellobiose from the non-reducing end of the cellulose polymer chain. Finally, beta-1,4-glucosidases hydrolyze the cellobiose and other short cello-oligosaccharides into glucose units. This chain is Endoglucanase EG-II (egl2), found in Hypocrea jecorina (strain ATCC 56765 / BCRC 32924 / NRRL 11460 / Rut C-30) (Trichoderma reesei).